Consider the following 622-residue polypeptide: Polypeptide N-acetylgalactosaminyltransferase 6 (622 aa).

The Cytoplasmic portion of the chain corresponds to 1–8 (MRLLRRRH). Residues 9–28 (MPLRLAMVGCAFVLFLFLLH) form a helical; Signal-anchor for type II membrane protein membrane-spanning segment. Over 29-622 (RDVSSREEAT…SDPHQLWLFV (594 aa)) the chain is Lumenal. N86 carries N-linked (GlcNAc...) asparagine glycosylation. Disulfide bonds link C165-C402 and C393-C474. Residues 176 to 285 (LATTSVIIVF…HGWLEPLLAR (110 aa)) are catalytic subdomain A. Positions 269, 271, and 407 each coordinate Mn(2+). The segment at 348–410 (PIKSPTFAGG…PCSVVGHVFR (63 aa)) is catalytic subdomain B. Residue N476 is glycosylated (N-linked (GlcNAc...) asparagine). The region spanning 506–622 (TNQCLDVGEN…SDPHQLWLFV (117 aa)) is the Ricin B-type lectin domain. Residues C509 and C527 are joined by a disulfide bond. UDP-N-acetyl-alpha-D-galactosamine-binding residues include D511, E514, H528, and N533. 2 disulfides stabilise this stretch: C553–C566 and C597–C610.

It belongs to the glycosyltransferase 2 family. GalNAc-T subfamily. The cofactor is Mn(2+). As to expression, expressed in placenta and trachea. Weakly expressed in brain and pancreas. Expressed in fibroblast. Weakly or not expressed in lung, liver, muscle, kidney, spleen, thymus, prostate, testis, ovary, intestine, colon, leukocyte, stomach, thyroid, spinal cord, lymph node, trachea, adrenal gland and bone marrow.

It is found in the golgi apparatus membrane. It catalyses the reaction L-seryl-[protein] + UDP-N-acetyl-alpha-D-galactosamine = a 3-O-[N-acetyl-alpha-D-galactosaminyl]-L-seryl-[protein] + UDP + H(+). The enzyme catalyses L-threonyl-[protein] + UDP-N-acetyl-alpha-D-galactosamine = a 3-O-[N-acetyl-alpha-D-galactosaminyl]-L-threonyl-[protein] + UDP + H(+). It participates in protein modification; protein glycosylation. Functionally, catalyzes the initial reaction in O-linked oligosaccharide biosynthesis, the transfer of an N-acetyl-D-galactosamine residue to a serine or threonine residue on the protein receptor. May participate in synthesis of oncofetal fibronectin. Has activity toward MUC1A, MUC2, EA2 and fibronectin peptides. Glycosylates FGF23. The sequence is that of Polypeptide N-acetylgalactosaminyltransferase 6 (GALNT6) from Homo sapiens (Human).